A 341-amino-acid polypeptide reads, in one-letter code: Guanine nucleotide-binding protein subunit beta (341 aa).

WD repeat units follow at residues 54 to 84, 96 to 126, 142 to 171, 183 to 213, 225 to 255, 269 to 299, and 311 to 341; these read GHLAKIYAMHWASDSRNLVSASQDGKLIVWD, LRSSWVMTCAYAPSGNYVACGGLDNICSIYS, GHTGYLSCCRFIDDNQIVTSSGDMTCALWN, GHTGDVMSLSLAPDMRTFVSGACDASAKLFD, GHESDINAITYFPNGFAFATGSDDATCRLFD, NIICGITSVAFSKSGRLLLGGYDDFNCNVWD, and GHDNRVSCLGVTEDGMAVATGSWDSFLKIWN.

It belongs to the WD repeat G protein beta family. As to quaternary structure, g proteins are composed of 3 units, alpha, beta and gamma.

Guanine nucleotide-binding proteins (G proteins) are involved as a modulator or transducer in various transmembrane signaling systems. The beta and gamma chains are required for the GTPase activity, for replacement of GDP by GTP, and for G protein-effector interaction. The sequence is that of Guanine nucleotide-binding protein subunit beta from Loligo forbesii (Veined squid).